Reading from the N-terminus, the 434-residue chain is Beta-enolase (434 aa).

Ala-2 carries the N-acetylalanine modification. Thr-72 is modified (phosphothreonine). Phosphoserine is present on residues Ser-83 and Ser-157. The substrate site is built by His-158 and Glu-167. At Ser-176 the chain carries Phosphoserine. Residue Thr-205 is modified to Phosphothreonine. Catalysis depends on Glu-210, which acts as the Proton donor. Position 229 is a phosphothreonine (Thr-229). The residue at position 236 (Tyr-236) is a Phosphotyrosine. Asp-245 is a binding site for Mg(2+). A Phosphoserine modification is found at Ser-263. Residues Glu-293 and Asp-318 each coordinate substrate. Residues Glu-293 and Asp-318 each contribute to the Mg(2+) site. The active-site Proton acceptor is the Lys-343. Substrate-binding positions include 370 to 373 and Lys-394; that span reads SHRS.

Belongs to the enolase family. In terms of assembly, mammalian enolase is composed of 3 isozyme subunits, alpha, beta and gamma, which can form homodimers or heterodimers which are cell-type and development-specific. In vitro, interacts with several glycolytic enzymes including PKM, PGM, CKM and ALDO. Also binds PLG and troponin, in vitro. Interacts with PNKD. The cofactor is Mg(2+). In terms of tissue distribution, brain (at protein level). The alpha/alpha homodimer is expressed in embryo and in most adult tissues. The alpha/beta heterodimer and the beta/beta homodimer are found in striated muscle, and the alpha/gamma heterodimer and the gamma/gamma homodimer in neurons. In striated muscle, the fiber-type order of ENO3 expression is IIB &gt; IIX &gt; IIA &gt; I.

It localises to the cytoplasm. It catalyses the reaction (2R)-2-phosphoglycerate = phosphoenolpyruvate + H2O. Its pathway is carbohydrate degradation; glycolysis; pyruvate from D-glyceraldehyde 3-phosphate: step 4/5. Glycolytic enzyme that catalyzes the conversion of 2-phosphoglycerate to phosphoenolpyruvate. Appears to have a function in striated muscle development and regeneration. This Mus musculus (Mouse) protein is Beta-enolase (Eno3).